The following is a 536-amino-acid chain: Membrane protein insertase YidC (536 aa).

Residues 5–25 (ALIAVILSIVFFYGYSALFPP) form a helical membrane-spanning segment. The interval 30-54 (APAPSAQQAVTGSQPGAPQASVAAV) is disordered. Residues 31–54 (PAPSAQQAVTGSQPGAPQASVAAV) show a composition bias toward low complexity. Transmembrane regions (helical) follow at residues 350–370 (YGIAIIIITVILKIIFYPLTH), 420–440 (LPMLVQIPVFFALYKALMFSI), 454–474 (LAGKDPYYVTPIIMGITMVIQ), and 494–514 (PVVFTFMFLNFPSGLVLYWLV).

It belongs to the OXA1/ALB3/YidC family. Type 1 subfamily. In terms of assembly, interacts with the Sec translocase complex via SecD. Specifically interacts with transmembrane segments of nascent integral membrane proteins during membrane integration.

It is found in the cell inner membrane. Functionally, required for the insertion and/or proper folding and/or complex formation of integral membrane proteins into the membrane. Involved in integration of membrane proteins that insert both dependently and independently of the Sec translocase complex, as well as at least some lipoproteins. Aids folding of multispanning membrane proteins. This chain is Membrane protein insertase YidC, found in Geobacter metallireducens (strain ATCC 53774 / DSM 7210 / GS-15).